A 425-amino-acid chain; its full sequence is Glutamate-1-semialdehyde 2,1-aminomutase (425 aa).

The residue at position 265 (K265) is an N6-(pyridoxal phosphate)lysine.

The protein belongs to the class-III pyridoxal-phosphate-dependent aminotransferase family. HemL subfamily. Homodimer. The cofactor is pyridoxal 5'-phosphate.

The protein localises to the cytoplasm. The enzyme catalyses (S)-4-amino-5-oxopentanoate = 5-aminolevulinate. It participates in porphyrin-containing compound metabolism; protoporphyrin-IX biosynthesis; 5-aminolevulinate from L-glutamyl-tRNA(Glu): step 2/2. The protein is Glutamate-1-semialdehyde 2,1-aminomutase of Clostridium perfringens (strain 13 / Type A).